Here is a 354-residue protein sequence, read N- to C-terminus: DNA polymerase IV (354 aa).

Positions 14 to 198 constitute a UmuC domain; that stretch reads IIHIDMDAFF…MDIAKFHGVG (185 aa). Residues Asp18 and Asp116 each contribute to the Mg(2+) site. The active site involves Glu117.

Belongs to the DNA polymerase type-Y family. In terms of assembly, monomer. It depends on Mg(2+) as a cofactor.

The protein resides in the cytoplasm. It catalyses the reaction DNA(n) + a 2'-deoxyribonucleoside 5'-triphosphate = DNA(n+1) + diphosphate. In terms of biological role, poorly processive, error-prone DNA polymerase involved in untargeted mutagenesis. Copies undamaged DNA at stalled replication forks, which arise in vivo from mismatched or misaligned primer ends. These misaligned primers can be extended by PolIV. Exhibits no 3'-5' exonuclease (proofreading) activity. May be involved in translesional synthesis, in conjunction with the beta clamp from PolIII. The chain is DNA polymerase IV from Streptococcus sanguinis (strain SK36).